Here is a 259-residue protein sequence, read N- to C-terminus: Adenosylcobinamide-GDP ribazoletransferase (259 aa).

The next 7 helical transmembrane spans lie at 36-56 (FSPL…ILLL), 65-85 (MPFI…VDGL), 108-128 (IGAS…AALF), 133-153 (LILF…IWAI), 175-195 (GFLI…FILI), 201-221 (IIST…ALII), and 238-258 (GASV…ILPA).

It belongs to the CobS family. Mg(2+) serves as cofactor.

Its subcellular location is the cell inner membrane. It catalyses the reaction alpha-ribazole + adenosylcob(III)inamide-GDP = adenosylcob(III)alamin + GMP + H(+). The enzyme catalyses alpha-ribazole 5'-phosphate + adenosylcob(III)inamide-GDP = adenosylcob(III)alamin 5'-phosphate + GMP + H(+). Its pathway is cofactor biosynthesis; adenosylcobalamin biosynthesis; adenosylcobalamin from cob(II)yrinate a,c-diamide: step 7/7. Functionally, joins adenosylcobinamide-GDP and alpha-ribazole to generate adenosylcobalamin (Ado-cobalamin). Also synthesizes adenosylcobalamin 5'-phosphate from adenosylcobinamide-GDP and alpha-ribazole 5'-phosphate. The sequence is that of Adenosylcobinamide-GDP ribazoletransferase from Prochlorococcus marinus (strain SARG / CCMP1375 / SS120).